The chain runs to 162 residues: Lipid droplet assembly factor 1-A (162 aa).

Over 1 to 42 (MASAENLYQEKMQELQKQMNKVMQTINNHSKVEAFLNSPFGQ) the chain is Cytoplasmic. The chain crosses the membrane as a helical span at residues 43-63 (YLDQHPFVTLSLLVFISLSAV). Over 64-65 (PV) the chain is Lumenal. The chain crosses the membrane as a helical span at residues 66-86 (GIFLTLIAGTAIAVCLAVLII). Residue glutamate 87 is a topological domain, cytoplasmic. The chain crosses the membrane as a helical span at residues 88 to 108 (GIVISVGGIALLCILCGLAVM). Serine 109 is a topological domain (lumenal). Residues 110-130 (LGVAAVLCVSYVAGSSVLNYI) form a helical membrane-spanning segment. Residues 131 to 162 (HAYRVTVGTRGRSGPISLNHETTTAEKSYRSS) lie on the Cytoplasmic side of the membrane.

The protein belongs to the LDAF1 family.

It localises to the endoplasmic reticulum membrane. The protein resides in the lipid droplet. Functionally, plays an important role in the formation of lipid droplets (LD) which are storage organelles at the center of lipid and energy homeostasis. This chain is Lipid droplet assembly factor 1-A, found in Xenopus laevis (African clawed frog).